A 357-amino-acid chain; its full sequence is Sorbitol dehydrogenase 1 (357 aa).

Cys-43 lines the Zn(2+) pocket. Tyr-49 is a substrate binding site. Positions 68 and 69 each coordinate Zn(2+). Glu-154 provides a ligand contact to substrate. Residues Asp-202, Lys-207, 275–277 (VGM), and 299–301 (CFR) contribute to the NAD(+) site. Positions 301 and 302 each coordinate substrate.

The protein belongs to the zinc-containing alcohol dehydrogenase family. Homotetramer. Requires Zn(2+) as cofactor.

The catalysed reaction is keto-D-fructose + NADH + H(+) = D-sorbitol + NAD(+). It catalyses the reaction xylitol + NAD(+) = D-xylulose + NADH + H(+). Its function is as follows. Polyol dehydrogenase that catalyzes the reversible NAD(+)-dependent oxidation of various sugar alcohols. Is active with D-sorbitol (D-glucitol) and xylitol as substrates, leading to the C2-oxidized product D-fructose and D-xylulose, respectively. Is likely involved in the utilization of D-sorbitol as a sole carbon source for growth. Has no activity on mannitol and primary alcohols such as ethanol. The sequence is that of Sorbitol dehydrogenase 1 (SOR1) from Saccharomyces cerevisiae (strain ATCC 204508 / S288c) (Baker's yeast).